The following is a 337-amino-acid chain: Probable cytosolic iron-sulfur protein assembly protein 1 (337 aa).

7 WD repeats span residues 11-50 (LHNDKVWSIDFEPVRGLLATGSTDRAIKVLQLKNGKENLL), 57-96 (VHKKAVRSVAWRPHSDLLAAGSFDSTISIWTQSDLDLEEG), 109-148 (GHENEVKGISWSQDGCLLATCSRDKSVWIWETDEAGEEYE), 155-194 (EHSQDVKHVVWHTKHNLLASSSYDDTVRIWKDYDDDWECA), 199-240 (GHEG…EDDQ), 252-290 (AHRSQIYGVAWSPSGRIASVGADGVLAVYKEKQNDSEVS), and 301-337 (AHTVYEINTVKWVNIDGKEMLITAGDDGRVNLWNYQD).

This sequence belongs to the WD repeat CIA1 family. As to quaternary structure, interacts with NAR1.

The protein resides in the cytoplasm. Its subcellular location is the nucleus. Essential component of the cytosolic iron-sulfur (Fe/S) protein assembly machinery. Required for the maturation of extramitochondrial Fe/S proteins. This chain is Probable cytosolic iron-sulfur protein assembly protein 1, found in Candida glabrata (strain ATCC 2001 / BCRC 20586 / JCM 3761 / NBRC 0622 / NRRL Y-65 / CBS 138) (Yeast).